The chain runs to 248 residues: Aliphatic sulfonates import ATP-binding protein SsuB 2 (248 aa).

One can recognise an ABC transporter domain in the interval 14–230; it reads VRVESLVRSF…DHGHRRFGEI (217 aa). An ATP-binding site is contributed by 46-53; that stretch reads GRSGSGKS.

Belongs to the ABC transporter superfamily. Aliphatic sulfonates importer (TC 3.A.1.17.2) family. In terms of assembly, the complex is composed of two ATP-binding proteins (SsuB), two transmembrane proteins (SsuC) and a solute-binding protein (SsuA).

It localises to the cell inner membrane. The enzyme catalyses ATP + H2O + aliphatic sulfonate-[sulfonate-binding protein]Side 1 = ADP + phosphate + aliphatic sulfonateSide 2 + [sulfonate-binding protein]Side 1.. Functionally, part of the ABC transporter complex SsuABC involved in aliphatic sulfonates import. Responsible for energy coupling to the transport system. The sequence is that of Aliphatic sulfonates import ATP-binding protein SsuB 2 from Mesorhizobium japonicum (strain LMG 29417 / CECT 9101 / MAFF 303099) (Mesorhizobium loti (strain MAFF 303099)).